We begin with the raw amino-acid sequence, 542 residues long: Major facilitator superfamily transporter mfsA (542 aa).

The next 11 membrane-spanning stretches (helical) occupy residues 19–39 (FAAVVGFSLFGYNQGMMAGLL), 70–90 (GAVTSCYELGCFFGALFSMFC), 99–119 (LIFMGASILIVGALLTTVCYT), 127–149 (FVIGRVVSGIGNGMNTATIPVWQ), 160–180 (FLVCFEGAMIAGGTFIAYWVV), 194–214 (FPVALQIFFALVVATGALMLP), 321–341 (IMGGVFASVYALATIPSFFMI), 349–369 (LYLIGFLGQGLSFVITFACLI), 380–400 (AVGIFLFITFFAFTLLPLPWI), 413–432 (VGASASTCTNWMCNFAVVMF), and 444–464 (VYLFFALFNFVGLIFGYFFYV).

Belongs to the major facilitator superfamily. Sugar transporter (TC 2.A.1.1) family.

The protein resides in the membrane. Its function is as follows. Major facilitator superfamily transporter that may be involved in A.fumigatus adaptation to azoles such as vorizonazole. This chain is Major facilitator superfamily transporter mfsA, found in Aspergillus fumigatus (strain ATCC MYA-4609 / CBS 101355 / FGSC A1100 / Af293) (Neosartorya fumigata).